A 191-amino-acid chain; its full sequence is Fe/S biogenesis protein NfuA (191 aa).

The [4Fe-4S] cluster site is built by C149 and C152.

This sequence belongs to the NfuA family. Homodimer. It depends on [4Fe-4S] cluster as a cofactor.

In terms of biological role, involved in iron-sulfur cluster biogenesis. Binds a 4Fe-4S cluster, can transfer this cluster to apoproteins, and thereby intervenes in the maturation of Fe/S proteins. Could also act as a scaffold/chaperone for damaged Fe/S proteins. The chain is Fe/S biogenesis protein NfuA from Yersinia pseudotuberculosis serotype O:1b (strain IP 31758).